Consider the following 494-residue polypeptide: Tyrosinase (494 aa).

H38, H53, C64, H224, H228, and H256 together coordinate Cu cation.

This sequence belongs to the tyrosinase family. Cu(2+) is required as a cofactor.

It catalyses the reaction 2 L-dopa + O2 = 2 L-dopaquinone + 2 H2O. The catalysed reaction is L-tyrosine + O2 = L-dopaquinone + H2O. This chain is Tyrosinase (mepA), found in Rhizobium meliloti (Ensifer meliloti).